We begin with the raw amino-acid sequence, 184 residues long: Endoribonuclease YbeY (184 aa).

2 stretches are compositionally biased toward acidic residues: residues 1 to 11 (MTVEVGADENP) and 19 to 29 (DGAGDESDDED). The interval 1–37 (MTVEVGADENPDFAHDETDGAGDESDDEDAQGRDPEL) is disordered. Residues H146, H150, and H156 each coordinate Zn(2+).

It belongs to the endoribonuclease YbeY family. Zn(2+) is required as a cofactor.

It is found in the cytoplasm. Functionally, single strand-specific metallo-endoribonuclease involved in late-stage 70S ribosome quality control and in maturation of the 3' terminus of the 16S rRNA. The polypeptide is Endoribonuclease YbeY (Burkholderia mallei (strain ATCC 23344)).